A 250-amino-acid polypeptide reads, in one-letter code: Proteasome subunit alpha type-4-1 (250 aa).

The protein belongs to the peptidase T1A family. The 26S proteasome consists of a 20S proteasome core and two 19S regulatory subunits. The 20S proteasome core is composed of 28 subunits that are arranged in four stacked rings, resulting in a barrel-shaped structure. The two end rings are each formed by seven alpha subunits, and the two central rings are each formed by seven beta subunits. The catalytic chamber with the active sites is on the inside of the barrel.

Its subcellular location is the cytoplasm. The protein localises to the nucleus. Functionally, the proteasome is a multicatalytic proteinase complex which is characterized by its ability to cleave peptides with Arg, Phe, Tyr, Leu, and Glu adjacent to the leaving group at neutral or slightly basic pH. The proteasome has an ATP-dependent proteolytic activity. The sequence is that of Proteasome subunit alpha type-4-1 from Oryza sativa subsp. indica (Rice).